Consider the following 336-residue polypeptide: 4-hydroxythreonine-4-phosphate dehydrogenase (336 aa).

T140 provides a ligand contact to substrate. Residues H171, H216, and H271 each coordinate a divalent metal cation. K279, N288, and R297 together coordinate substrate.

This sequence belongs to the PdxA family. Homodimer. Requires Zn(2+) as cofactor. It depends on Mg(2+) as a cofactor. Co(2+) serves as cofactor.

The protein resides in the cytoplasm. It carries out the reaction 4-(phosphooxy)-L-threonine + NAD(+) = 3-amino-2-oxopropyl phosphate + CO2 + NADH. It functions in the pathway cofactor biosynthesis; pyridoxine 5'-phosphate biosynthesis; pyridoxine 5'-phosphate from D-erythrose 4-phosphate: step 4/5. In terms of biological role, catalyzes the NAD(P)-dependent oxidation of 4-(phosphooxy)-L-threonine (HTP) into 2-amino-3-oxo-4-(phosphooxy)butyric acid which spontaneously decarboxylates to form 3-amino-2-oxopropyl phosphate (AHAP). This chain is 4-hydroxythreonine-4-phosphate dehydrogenase, found in Erythrobacter litoralis (strain HTCC2594).